We begin with the raw amino-acid sequence, 409 residues long: Arginine deiminase (409 aa).

The active-site Amidino-cysteine intermediate is Cys399.

This sequence belongs to the arginine deiminase family.

The protein localises to the cytoplasm. The catalysed reaction is L-arginine + H2O = L-citrulline + NH4(+). It participates in amino-acid degradation; L-arginine degradation via ADI pathway; carbamoyl phosphate from L-arginine: step 1/2. This chain is Arginine deiminase, found in Streptococcus pneumoniae serotype 19F (strain G54).